The primary structure comprises 55 residues: U2-theraphotoxin-Cg1a (55 aa).

Residues 1–19 constitute a propeptide that is removed on maturation; that stretch reads DSPAWLKSMERIFQSEERE. Intrachain disulfides connect C20–C34, C27–C39, and C33–C47.

This sequence belongs to the neurotoxin 10 (Hwtx-1) family. 06 (F4b) subfamily. Expressed by the venom gland.

It is found in the secreted. Probable ion channel inhibitor. The chain is U2-theraphotoxin-Cg1a from Chilobrachys guangxiensis (Chinese earth tiger tarantula).